A 350-amino-acid chain; its full sequence is Magnesium-chelatase 38 kDa subunit (350 aa).

52-59 (GDRGTGKS) contributes to the ATP binding site.

The protein belongs to the Mg-chelatase subunits D/I family.

It catalyses the reaction protoporphyrin IX + Mg(2+) + ATP + H2O = Mg-protoporphyrin IX + ADP + phosphate + 3 H(+). It participates in porphyrin-containing compound metabolism; bacteriochlorophyll biosynthesis. Involved in bacteriochlorophyll biosynthesis; introduces a magnesium ion into protoporphyrin IX to yield Mg-protoporphyrin IX. The polypeptide is Magnesium-chelatase 38 kDa subunit (bchI) (Rhodobacter capsulatus (strain ATCC BAA-309 / NBRC 16581 / SB1003)).